The primary structure comprises 279 residues: Undecaprenyl-diphosphatase (279 aa).

Helical transmembrane passes span 1 to 21 (MVLEAVLLGIVQGITEFLPIS), 39 to 59 (GRFFLSSVQLGTSFALILYFF), 96 to 116 (LLLVTGTIPVVLLGFLLVRFV), 128 to 148 (FTMGVALIVFGLLLGFADALF), 155 to 175 (IFQITFIESVLIGAAQVFAII), 201 to 221 (FSFLLSLPVTFIGGMYGLVAG), 231 to 251 (YSLIGAIVSFVVGLLVVSALL), and 259 to 279 (FVLFVYYRVLFGLFLVIVSFF).

This sequence belongs to the UppP family.

It localises to the cell membrane. It catalyses the reaction di-trans,octa-cis-undecaprenyl diphosphate + H2O = di-trans,octa-cis-undecaprenyl phosphate + phosphate + H(+). Catalyzes the dephosphorylation of undecaprenyl diphosphate (UPP). Confers resistance to bacitracin. In Tropheryma whipplei (strain Twist) (Whipple's bacillus), this protein is Undecaprenyl-diphosphatase.